A 719-amino-acid polypeptide reads, in one-letter code: Phosphoribosylformylglycinamidine synthase subunit PurL (719 aa).

His45 is an active-site residue. Residues Tyr48 and Lys87 each contribute to the ATP site. Glu89 contacts Mg(2+). Substrate-binding positions include 90–93 and Arg112; that span reads SHNH. The active-site Proton acceptor is His91. Asp113 is a binding site for Mg(2+). Substrate is bound at residue Gln236. Asp264 lines the Mg(2+) pocket. Substrate is bound at residue 308–310; it reads ESQ. 2 residues coordinate ATP: Asn493 and Gly530. A Mg(2+)-binding site is contributed by Asn531. Ser533 contributes to the substrate binding site.

The protein belongs to the FGAMS family. In terms of assembly, monomer. Part of the FGAM synthase complex composed of 1 PurL, 1 PurQ and 2 PurS subunits.

The protein localises to the cytoplasm. The enzyme catalyses N(2)-formyl-N(1)-(5-phospho-beta-D-ribosyl)glycinamide + L-glutamine + ATP + H2O = 2-formamido-N(1)-(5-O-phospho-beta-D-ribosyl)acetamidine + L-glutamate + ADP + phosphate + H(+). It functions in the pathway purine metabolism; IMP biosynthesis via de novo pathway; 5-amino-1-(5-phospho-D-ribosyl)imidazole from N(2)-formyl-N(1)-(5-phospho-D-ribosyl)glycinamide: step 1/2. In terms of biological role, part of the phosphoribosylformylglycinamidine synthase complex involved in the purines biosynthetic pathway. Catalyzes the ATP-dependent conversion of formylglycinamide ribonucleotide (FGAR) and glutamine to yield formylglycinamidine ribonucleotide (FGAM) and glutamate. The FGAM synthase complex is composed of three subunits. PurQ produces an ammonia molecule by converting glutamine to glutamate. PurL transfers the ammonia molecule to FGAR to form FGAM in an ATP-dependent manner. PurS interacts with PurQ and PurL and is thought to assist in the transfer of the ammonia molecule from PurQ to PurL. The protein is Phosphoribosylformylglycinamidine synthase subunit PurL of Novosphingobium aromaticivorans (strain ATCC 700278 / DSM 12444 / CCUG 56034 / CIP 105152 / NBRC 16084 / F199).